A 1183-amino-acid polypeptide reads, in one-letter code: DNA-directed RNA polymerase subunit beta (1183 aa).

The segment covering 1153–1162 has biased composition (acidic residues); sequence DMQDNEEEDV. A disordered region spans residues 1153–1183; the sequence is DMQDNEEEDVVERKVDLQQKDAPQSQKEVTD. Positions 1173-1183 are enriched in polar residues; sequence DAPQSQKEVTD.

Belongs to the RNA polymerase beta chain family. In terms of assembly, the RNAP catalytic core consists of 2 alpha, 1 beta, 1 beta' and 1 omega subunit. When a sigma factor is associated with the core the holoenzyme is formed, which can initiate transcription.

It carries out the reaction RNA(n) + a ribonucleoside 5'-triphosphate = RNA(n+1) + diphosphate. DNA-dependent RNA polymerase catalyzes the transcription of DNA into RNA using the four ribonucleoside triphosphates as substrates. The polypeptide is DNA-directed RNA polymerase subunit beta (Staphylococcus saprophyticus subsp. saprophyticus (strain ATCC 15305 / DSM 20229 / NCIMB 8711 / NCTC 7292 / S-41)).